A 256-amino-acid polypeptide reads, in one-letter code: Anamorsin homolog (256 aa).

Residues 1–136 (MNSLSLELNK…DTNESSTINI (136 aa)) form an N-terminal SAM-like domain region. Residues 126–148 (WDTNESSTINIPSTSSNNPWASI) form a disordered region. Residues 131–144 (SSTINIPSTSSNNP) show a composition bias toward low complexity. The linker stretch occupies residues 137 to 166 (PSTSSNNPWASIEGGDRINENDLVSENDKT). [2Fe-2S] cluster-binding residues include cysteine 176, cysteine 185, cysteine 188, and cysteine 190. Residues 176 to 190 (CEVGKTKKACKNCTC) are fe-S binding site A. Cysteine 217, cysteine 220, cysteine 228, and cysteine 231 together coordinate [4Fe-4S] cluster. 2 short sequence motifs (cx2C motif) span residues 217 to 220 (CGNC) and 228 to 231 (CGGC). Residues 217 to 231 (CGNCSLGDAFRCGGC) are fe-S binding site B.

This sequence belongs to the anamorsin family. As to quaternary structure, monomer. The cofactor is [2Fe-2S] cluster. [4Fe-4S] cluster serves as cofactor.

The protein localises to the cytoplasm. It localises to the mitochondrion intermembrane space. In terms of biological role, component of the cytosolic iron-sulfur (Fe-S) protein assembly (CIA) machinery. Required for the maturation of extramitochondrial Fe-S proteins. Part of an electron transfer chain functioning in an early step of cytosolic Fe-S biogenesis, facilitating the de novo assembly of a [4Fe-4S] cluster on the cytosolic Fe-S scaffold complex. Electrons are transferred from NADPH via a FAD- and FMN-containing diflavin oxidoreductase. Together with the diflavin oxidoreductase, also required for the assembly of the diferric tyrosyl radical cofactor of ribonucleotide reductase (RNR), probably by providing electrons for reduction during radical cofactor maturation in the catalytic small subunit. The polypeptide is Anamorsin homolog (rsc43) (Dictyostelium discoideum (Social amoeba)).